A 379-amino-acid polypeptide reads, in one-letter code: MTDNIAATIKEKRERLHMTQKEFADALGLSKYGDRTIRRWERGETKPTGAELKAVIDFPDTPPYPNNENGRYRMIDLFAGIGGTRLGFHQTNAVNVVFSSEWDKFAQKTYHANYGDFPDGDITKIDEKDIPDHEILVGGFPCVAFSQAGLKKGFNDTRGTLFFDIARIIKEKKPHAFLLENVKNLLGHDKGRTFSIIKNTLEELNYTVYYNIFAAKDFGVPQNRERIYIVGFNKEKVRNHEHFTFPTPLKTKTRVGDILEKSVDNKYTLSDALWNGHQRRKLVNAAAGKGFGYGLFNENSPYTNTISARYYKDGSEILIEQKGSNPRKITPREASRLQGFPSDFIIPVSDTQAYKQFGNSVAVPVINAIAEKIISTLDS.

Residues 9–66 (IKEKRERLHMTQKEFADALGLSKYGDRTIRRWERGETKPTGAELKAVIDFPDTPPYPN) enclose the HTH cro/C1-type domain. Positions 72–379 (YRMIDLFAGI…AEKIISTLDS (308 aa)) constitute an SAM-dependent MTase C5-type domain. Cys-142 is an active-site residue.

The protein belongs to the class I-like SAM-binding methyltransferase superfamily. C5-methyltransferase family.

It catalyses the reaction a 2'-deoxycytidine in DNA + S-adenosyl-L-methionine = a 5-methyl-2'-deoxycytidine in DNA + S-adenosyl-L-homocysteine + H(+). Its function is as follows. A methylase that recognizes the double-stranded sequence 5'-CCNGG-3', methylates C-2 on both strands, and protects the DNA from cleavage by the SsoII endonuclease. This chain is Type II methyltransferase M.SsoII (ssoIIM), found in Shigella sonnei.